Here is a 616-residue protein sequence, read N- to C-terminus: Alpha terpineol synthase, chloroplastic (616 aa).

The N-terminal 41 residues, 1–41 (MALLSVAPLQKPLTSCSPFSTTMPTLGVCTPRKVVTPSIIM), are a transit peptide targeting the chloroplast. Mg(2+) is bound by residues D367, D371, and D519. Residues 367-371 (DDIYD) carry the DDXXD motif motif.

The protein belongs to the terpene synthase family. Tpsd subfamily. Requires Mg(2+) as cofactor. Mn(2+) is required as a cofactor.

The protein localises to the plastid. It localises to the chloroplast. The catalysed reaction is (2E)-geranyl diphosphate + H2O = (S)-alpha-terpineol + diphosphate. It carries out the reaction (2E)-geranyl diphosphate + H2O = 1,8-cineole + diphosphate. The enzyme catalyses (2E)-geranyl diphosphate = beta-myrcene + diphosphate. It catalyses the reaction (2E)-geranyl diphosphate = (1S,5S)-sabinene + diphosphate. The protein operates within terpene metabolism; oleoresin biosynthesis. It participates in secondary metabolite biosynthesis; terpenoid biosynthesis. In terms of biological role, monoterpene synthase (TPS) involved in the biosynthesis of monoterpene natural products included in conifer oleoresin secretions and volatile emissions; these compounds contribute to biotic and abiotic stress defense against herbivores and pathogens. Catalyzes the conversion of (2E)-geranyl diphosphate (GPP) to alpha-terpineol and, to a lower extent, to 1,8-cineole, myrcene and (-)-sabinene. This chain is Alpha terpineol synthase, chloroplastic, found in Pinus contorta (Shore pine).